We begin with the raw amino-acid sequence, 339 residues long: D-erythrose-4-phosphate dehydrogenase (339 aa).

11 to 12 (RI) is an NAD(+) binding site. Substrate-binding positions include 153-155 (SCT), R199, 212-213 (TK), and R235. The active-site Nucleophile is C154. N317 contributes to the NAD(+) binding site.

The protein belongs to the glyceraldehyde-3-phosphate dehydrogenase family. Epd subfamily. In terms of assembly, homotetramer.

It is found in the cytoplasm. The catalysed reaction is D-erythrose 4-phosphate + NAD(+) + H2O = 4-phospho-D-erythronate + NADH + 2 H(+). Its pathway is cofactor biosynthesis; pyridoxine 5'-phosphate biosynthesis; pyridoxine 5'-phosphate from D-erythrose 4-phosphate: step 1/5. Its function is as follows. Catalyzes the NAD-dependent conversion of D-erythrose 4-phosphate to 4-phosphoerythronate. The polypeptide is D-erythrose-4-phosphate dehydrogenase (Shewanella halifaxensis (strain HAW-EB4)).